The following is a 119-amino-acid chain: Immunoglobulin heavy variable 2-70 (119 aa).

A signal peptide spans 1–19 (MDILCSTLLLLTVPSWVLS). Q20 carries the pyrrolidone carboxylic acid modification. Residues 20–44 (QVTLRESGPALVKPTQTLTLTCTFS) are framework-1. Residues 20 to 119 (QVTLRESGPA…DTATYYCARI (100 aa)) enclose the Ig-like domain. C41 and C116 are joined by a disulfide. Residues 45 to 54 (GFSLSTSGMC) form a complementarity-determining-1 region. A framework-2 region spans residues 55–71 (VSWIRQPPGKALEWLAL). A complementarity-determining-2 region spans residues 72-78 (IDWDDDK). The interval 79 to 116 (YYSTSLKTRLTISKDTSKNQVVLTMTNMDPVDTATYYC) is framework-3. The interval 117 to 119 (ARI) is complementarity-determining-3.

In terms of assembly, immunoglobulins are composed of two identical heavy chains and two identical light chains; disulfide-linked.

It localises to the secreted. It is found in the cell membrane. Functionally, v region of the variable domain of immunoglobulin heavy chains that participates in the antigen recognition. Immunoglobulins, also known as antibodies, are membrane-bound or secreted glycoproteins produced by B lymphocytes. In the recognition phase of humoral immunity, the membrane-bound immunoglobulins serve as receptors which, upon binding of a specific antigen, trigger the clonal expansion and differentiation of B lymphocytes into immunoglobulins-secreting plasma cells. Secreted immunoglobulins mediate the effector phase of humoral immunity, which results in the elimination of bound antigens. The antigen binding site is formed by the variable domain of one heavy chain, together with that of its associated light chain. Thus, each immunoglobulin has two antigen binding sites with remarkable affinity for a particular antigen. The variable domains are assembled by a process called V-(D)-J rearrangement and can then be subjected to somatic hypermutations which, after exposure to antigen and selection, allow affinity maturation for a particular antigen. This chain is Immunoglobulin heavy variable 2-70, found in Homo sapiens (Human).